Here is a 332-residue protein sequence, read N- to C-terminus: Adenine deaminase (332 aa).

Residues His14, His16, and His194 each contribute to the Zn(2+) site. The Proton donor role is filled by Glu197. Asp275 is a Zn(2+) binding site. Residue Asp276 coordinates substrate.

Belongs to the metallo-dependent hydrolases superfamily. Adenosine and AMP deaminases family. Adenine deaminase type 2 subfamily. It depends on Zn(2+) as a cofactor.

It catalyses the reaction adenine + H2O + H(+) = hypoxanthine + NH4(+). Functionally, catalyzes the hydrolytic deamination of adenine to hypoxanthine. Plays an important role in the purine salvage pathway and in nitrogen catabolism. This chain is Adenine deaminase, found in Psychrobacter cryohalolentis (strain ATCC BAA-1226 / DSM 17306 / VKM B-2378 / K5).